The chain runs to 257 residues: Pyridoxine 5'-phosphate synthase (257 aa).

Position 6 (asparagine 6) interacts with 3-amino-2-oxopropyl phosphate. Aspartate 8 to histidine 9 is a binding site for 1-deoxy-D-xylulose 5-phosphate. Residue arginine 17 participates in 3-amino-2-oxopropyl phosphate binding. Histidine 41 acts as the Proton acceptor in catalysis. 1-deoxy-D-xylulose 5-phosphate is bound by residues arginine 43 and histidine 48. Glutamate 68 acts as the Proton acceptor in catalysis. Residue threonine 98 coordinates 1-deoxy-D-xylulose 5-phosphate. The active-site Proton donor is histidine 210. Residues glycine 211 and glycine 232–glutamine 233 contribute to the 3-amino-2-oxopropyl phosphate site.

The protein belongs to the PNP synthase family. Homooctamer; tetramer of dimers.

The protein localises to the cytoplasm. It carries out the reaction 3-amino-2-oxopropyl phosphate + 1-deoxy-D-xylulose 5-phosphate = pyridoxine 5'-phosphate + phosphate + 2 H2O + H(+). The protein operates within cofactor biosynthesis; pyridoxine 5'-phosphate biosynthesis; pyridoxine 5'-phosphate from D-erythrose 4-phosphate: step 5/5. In terms of biological role, catalyzes the complicated ring closure reaction between the two acyclic compounds 1-deoxy-D-xylulose-5-phosphate (DXP) and 3-amino-2-oxopropyl phosphate (1-amino-acetone-3-phosphate or AAP) to form pyridoxine 5'-phosphate (PNP) and inorganic phosphate. The polypeptide is Pyridoxine 5'-phosphate synthase (Campylobacter jejuni subsp. jejuni serotype O:2 (strain ATCC 700819 / NCTC 11168)).